We begin with the raw amino-acid sequence, 148 residues long: MRALIILGLVLLSVTVQGKIFERCELARTLKKLGLDGYKGVSLANWVCLAKWESGYNTEATNYNPGDESTDYGIFQINSRYWCNNGKTPGAVDACHISCSALLQNNIADAVACAKRVVSDPQGIRAWVAWRNHCQNKDVSQYVKGCGV.

An N-terminal signal peptide occupies residues 1-18 (MRALIILGLVLLSVTVQG). Residues 19–148 (KIFERCELAR…VSQYVKGCGV (130 aa)) enclose the C-type lysozyme domain. 4 disulfide bridges follow: Cys-24-Cys-146, Cys-48-Cys-134, Cys-83-Cys-99, and Cys-95-Cys-113. Residues Glu-53 and Asp-71 contribute to the active site.

It belongs to the glycosyl hydrolase 22 family. As to quaternary structure, monomer.

It localises to the secreted. It carries out the reaction Hydrolysis of (1-&gt;4)-beta-linkages between N-acetylmuramic acid and N-acetyl-D-glucosamine residues in a peptidoglycan and between N-acetyl-D-glucosamine residues in chitodextrins.. In terms of biological role, lysozymes have primarily a bacteriolytic function; those in tissues and body fluids are associated with the monocyte-macrophage system and enhance the activity of immunoagents. Also plays a role in digestion in this species. This chain is Lysozyme C (LYZ), found in Trachypithecus francoisi (Francois' leaf monkey).